The following is a 231-amino-acid chain: Large ribosomal subunit protein uL1 (231 aa).

It belongs to the universal ribosomal protein uL1 family. As to quaternary structure, part of the 50S ribosomal subunit.

Its function is as follows. Binds directly to 23S rRNA. The L1 stalk is quite mobile in the ribosome, and is involved in E site tRNA release. Functionally, protein L1 is also a translational repressor protein, it controls the translation of the L11 operon by binding to its mRNA. This chain is Large ribosomal subunit protein uL1, found in Janthinobacterium sp. (strain Marseille) (Minibacterium massiliensis).